A 180-amino-acid chain; its full sequence is Large ribosomal subunit protein uL5 (180 aa).

The protein belongs to the universal ribosomal protein uL5 family. As to quaternary structure, part of the 50S ribosomal subunit; part of the 5S rRNA/L5/L18/L25 subcomplex. Contacts the 5S rRNA and the P site tRNA. Forms a bridge to the 30S subunit in the 70S ribosome.

Its function is as follows. This is one of the proteins that bind and probably mediate the attachment of the 5S RNA into the large ribosomal subunit, where it forms part of the central protuberance. In the 70S ribosome it contacts protein S13 of the 30S subunit (bridge B1b), connecting the 2 subunits; this bridge is implicated in subunit movement. Contacts the P site tRNA; the 5S rRNA and some of its associated proteins might help stabilize positioning of ribosome-bound tRNAs. This is Large ribosomal subunit protein uL5 from Xanthomonas euvesicatoria pv. vesicatoria (strain 85-10) (Xanthomonas campestris pv. vesicatoria).